The chain runs to 372 residues: Fatty acid 2-hydroxylase (372 aa).

A Cytochrome b5 heme-binding domain is found at 8–86 (AASFTSAEVQ…LEQYYVGELR (79 aa)). Heme is bound by residues H43 and H69. 2 helical membrane passes run 168–188 (VWYS…WSYY) and 213–233 (SVFI…EYLI). Residues 219-361 (FVLGMLIWTL…TKLWDYFFHT (143 aa)) enclose the Fatty acid hydroxylase domain. 5 residues coordinate Zn(2+): H234, H239, H257, H260, and H261. 2 helical membrane-spanning segments follow: residues 268 to 288 (SRLV…YVFL) and 290 to 310 (LILP…GYVL). Zn(2+) contacts are provided by H315, H319, H336, H339, and H340.

Belongs to the sterol desaturase family. SCS7 subfamily. Zn(2+) is required as a cofactor. As to expression, detected in oligodendrocytes (at protein level). Detected in sciatic nerve.

It is found in the endoplasmic reticulum membrane. It localises to the microsome membrane. It carries out the reaction a 1,2-saturated fatty acid + 2 Fe(II)-[cytochrome b5] + O2 + 2 H(+) = a (R)-2-hydroxy fatty acid + 2 Fe(III)-[cytochrome b5] + H2O. It catalyses the reaction hexadecanoate + 2 Fe(II)-[cytochrome b5] + O2 + 2 H(+) = (R)-2-hydroxyhexadecanoate + 2 Fe(III)-[cytochrome b5] + H2O. The catalysed reaction is octadecanoate + 2 Fe(II)-[cytochrome b5] + O2 + 2 H(+) = (R)-2-hydroxyoctadecanoate + 2 Fe(III)-[cytochrome b5] + H2O. The enzyme catalyses docosanoate + 2 Fe(II)-[cytochrome b5] + O2 + 2 H(+) = 2-hydroxydocosanoate + 2 Fe(III)-[cytochrome b5] + H2O. It carries out the reaction tetracosanoate + 2 Fe(II)-[cytochrome b5] + O2 + 2 H(+) = (R)-2-hydroxytetracosanoate + 2 Fe(III)-[cytochrome b5] + H2O. Its pathway is lipid metabolism; fatty acid metabolism. The protein operates within sphingolipid metabolism; galactosylceramide biosynthesis. Catalyzes the hydroxylation of free fatty acids at the C-2 position to produce 2-hydroxy fatty acids, which are building blocks of sphingolipids and glycosphingolipids common in neural tissue and epidermis. FA2H is stereospecific for the production of (R)-2-hydroxy fatty acids. Plays an essential role in the synthesis of galactosphingolipids of the myelin sheath. Responsible for the synthesis of sphingolipids and glycosphingolipids involved in the formation of epidermal lamellar bodies critical for skin permeability barrier. Participates in the synthesis of glycosphingolipids and a fraction of type II wax diesters in sebaceous gland, specifically regulating hair follicle homeostasis. Involved in the synthesis of sphingolipids of plasma membrane rafts, controlling lipid raft mobility and trafficking of raft-associated proteins. This is Fatty acid 2-hydroxylase from Rattus norvegicus (Rat).